The primary structure comprises 430 residues: Anaerobic glycerol-3-phosphate dehydrogenase subunit B (430 aa).

This sequence belongs to the anaerobic G-3-P dehydrogenase subunit B family. In terms of assembly, composed of a catalytic GlpA/B dimer and of membrane bound GlpC. FMN serves as cofactor.

It carries out the reaction a quinone + sn-glycerol 3-phosphate = dihydroxyacetone phosphate + a quinol. Its pathway is polyol metabolism; glycerol degradation via glycerol kinase pathway; glycerone phosphate from sn-glycerol 3-phosphate (anaerobic route): step 1/1. Functionally, conversion of glycerol 3-phosphate to dihydroxyacetone. Uses fumarate or nitrate as electron acceptor. The sequence is that of Anaerobic glycerol-3-phosphate dehydrogenase subunit B from Actinobacillus succinogenes (strain ATCC 55618 / DSM 22257 / CCUG 43843 / 130Z).